The primary structure comprises 795 residues: Lon protease (795 aa).

Residues 11–203 form the Lon N-terminal domain; the sequence is GRVIPVSDIV…KFIDYLLKQK (193 aa). Residue 356-363 coordinates ATP; the sequence is GPPGVGKT. A Lon proteolytic domain is found at 593–771; the sequence is DNVPGVVTGL…EDVLRETLGI (179 aa). Residues Ser677 and Lys720 contribute to the active site.

It belongs to the peptidase S16 family. As to quaternary structure, homohexamer. Organized in a ring with a central cavity.

It localises to the cytoplasm. It carries out the reaction Hydrolysis of proteins in presence of ATP.. In terms of biological role, ATP-dependent serine protease that mediates the selective degradation of mutant and abnormal proteins as well as certain short-lived regulatory proteins. Required for cellular homeostasis and for survival from DNA damage and developmental changes induced by stress. Degrades polypeptides processively to yield small peptide fragments that are 5 to 10 amino acids long. Binds to DNA in a double-stranded, site-specific manner. The chain is Lon protease from Clostridium beijerinckii (strain ATCC 51743 / NCIMB 8052) (Clostridium acetobutylicum).